Consider the following 411-residue polypeptide: CCA-adding enzyme (411 aa).

Residues glycine 8 and arginine 11 each contribute to the ATP site. CTP-binding residues include glycine 8 and arginine 11. Residues glutamate 21 and aspartate 23 each coordinate Mg(2+). ATP-binding residues include arginine 91, arginine 137, and arginine 140. Positions 91, 137, and 140 each coordinate CTP. An HD domain is found at 227-328 (LGNQTMTRLS…MTIFQAFDCW (102 aa)).

The protein belongs to the tRNA nucleotidyltransferase/poly(A) polymerase family. Bacterial CCA-adding enzyme type 2 subfamily. Requires Mg(2+) as cofactor.

The catalysed reaction is a tRNA precursor + 2 CTP + ATP = a tRNA with a 3' CCA end + 3 diphosphate. The enzyme catalyses a tRNA with a 3' CCA end + 2 CTP + ATP = a tRNA with a 3' CCACCA end + 3 diphosphate. Functionally, catalyzes the addition and repair of the essential 3'-terminal CCA sequence in tRNAs without using a nucleic acid template. Adds these three nucleotides in the order of C, C, and A to the tRNA nucleotide-73, using CTP and ATP as substrates and producing inorganic pyrophosphate. tRNA 3'-terminal CCA addition is required both for tRNA processing and repair. Also involved in tRNA surveillance by mediating tandem CCA addition to generate a CCACCA at the 3' terminus of unstable tRNAs. While stable tRNAs receive only 3'-terminal CCA, unstable tRNAs are marked with CCACCA and rapidly degraded. In Blochmanniella floridana, this protein is CCA-adding enzyme.